Here is a 196-residue protein sequence, read N- to C-terminus: Calcium channel flower (196 aa).

3 helical membrane passes run Leu35 to Ile55, Leu70 to Ser92, and Ala113 to Phe133.

This sequence belongs to the calcium channel flower family. Homomultimer. Associates with the dally/ magu complex.

The protein localises to the cell membrane. It is found in the cytoplasmic vesicle. Its subcellular location is the secretory vesicle. It localises to the synaptic vesicle membrane. The protein resides in the presynaptic cell membrane. The protein localises to the endosome. Its activity is regulated as follows. Channel activity is inhibited by La(3+), which reduces Ca(2+) influx and thus inhibits it's function in promoting activity-dependent bulk endocytosis (ADBE) in response to high stimuli. In terms of biological role, transmembrane protein which mediates synaptic endocytosis, fitness-based cell culling, neuronal culling, morphogen gradient scaling, and calcium transport. Regulates synaptic endocytosis and hence couples exo- with endocytosis. Controls two major modes of synaptic vesicle (SV) endocytosis in the synaptic boutons of neuromuscular junctions (NMJs); Ca(2+) channel-independent Clathrin-mediated endocytosis (CME) in response to mild stimulation, and Ca(2+) channel-dependent activity-dependent bulk endocytosis (ADBE) in response to strong stimulation. Functions in ADBE and subsequent SV reformation from bulk endosomes by initiating Ca(2+) channel-dependent phosphatidylinositol 4,5-bisphosphate (PtdIns(4,5)P2) compartmentalization in synaptic boutons. There it acts at the periactive zone to provide the low Ca(2+) levels required to initiate Calcineurin activation and upregulate PtdIns(4,5)P2. Conversely PtdIns(4,5)P2 enhances fwe Ca(2+) channel-activity, establishing a positive feedback loop that induces PtdIns(4,5)P2 microdomain at the periactive zone. These microdomains trigger bulk membrane invagination (i.e. ADBE) by triggering actin polymerization while also promoting localization of fwe to bulk endosomes, thereby removing the ADBE trigger to reduce endocytosis and prevent excess membrane uptake. PtdIns(4,5)P2 then promotes SV reformation from the bulk endosomes, to coordinate ADBE and subsequent SV reformation. Different combinations of the flower isoforms at the cell membrane are also required for the identification and elimination of suboptimal or supernumerary cells during development, regeneration, and adulthood. Required for the recognition and elimination of unfit cells in the developing wing during cell competition. In the developing pupal retina, mediates the elimination of unwanted postmitotic neurons, including supernumerary photoreceptor neurons that form at the periphery of the retina and are contained within incomplete ommatidia units. Also required for efficient elimination and replacement of old neurons by newly generated neurons during regeneration in the adult brain following mechanical injury. Downstream of the flower fitness fingerprints, cells identified as unwanted or unfit are eliminated via apoptosis through the expression of ahuizotl (azot). However, the cells marked for elimination by the flower isoforms only undergo apoptosis if additional thresholds are met; (1) their neighboring fit/healthy cells express different levels of the fwe isoforms, and (2) the levels of the protective signal SPARC expressed by the loser or unwanted cells are unable to inhibit caspase activation. These additional thresholds for flower-mediated apoptosis, allows useful cells to recover from transient and limited stress before they are unnecessarily eliminated. Functions with dally and magu in a mechanism of scaling, which utilises apoptosis to ensure that the dpp morphogen gradient, which mediates organ growth, remains proportional to the size of the growing wing. In this mechanism, fwe represses dally- and Magu-dependent activity in expanding the gradient, and dally/Magu inhibits fwe-dependent apoptosis to keep cell death rate low. When the levels of these different proteins are optimally regulated the gradient correctly scales with organ growth but when this fails, fwe-mediated apoptosis is activated to trim the developing tissue to match the correct size of the gradient. This is Calcium channel flower from Drosophila grimshawi (Hawaiian fruit fly).